The primary structure comprises 427 residues: Nuclear distribution protein PAC1-2 (427 aa).

The 33-residue stretch at 8–40 (QKDDLNKSIAEYLYAQDLTEIADSLCARLSLDY) folds into the LisH domain. Residues 58–82 (SVIRLQKKLIESENRYTALQEDIAA) adopt a coiled-coil conformation. WD repeat units lie at residues 106–147 (SHRA…RTLK), 149–187 (HTRE…NAGY), 194–233 (GHEH…CIRT), 236–275 (GHED…MKME), 278–336 (GHGH…ELRT), 339–378 (GHND…CMXV), and 381–420 (AHSH…SRIM).

It belongs to the WD repeat LIS1/nudF family. Self-associates. Interacts with NDL1 and dynein.

The protein resides in the cytoplasm. It is found in the cytoskeleton. It localises to the spindle pole. In terms of biological role, positively regulates the activity of the minus-end directed microtubule motor protein dynein. May enhance dynein-mediated microtubule sliding by targeting dynein to the microtubule plus end. Required for nuclear migration during vegetative growth as well as development. Required for retrograde early endosome (EE) transport from the hyphal tip. Required for localization of dynein to the mitotic spindle poles. Recruits additional proteins to the dynein complex at SPBs. This Postia placenta (strain ATCC 44394 / Madison 698-R) (Brown rot fungus) protein is Nuclear distribution protein PAC1-2.